Consider the following 408-residue polypeptide: GTPase HflX (408 aa).

The region spanning 198–361 (PRVSLVGYTN…LIVREMERHY (164 aa)) is the Hflx-type G domain. GTP is bound by residues 204 to 211 (GYTNAGKS), 229 to 233 (FVTLD), 251 to 254 (DTVG), 317 to 320 (NKAD), and 339 to 341 (SAK). Residues Ser211 and Thr231 each contribute to the Mg(2+) site.

The protein belongs to the TRAFAC class OBG-HflX-like GTPase superfamily. HflX GTPase family. Monomer. Associates with the 50S ribosomal subunit. It depends on Mg(2+) as a cofactor.

It is found in the cytoplasm. In terms of biological role, GTPase that associates with the 50S ribosomal subunit and may have a role during protein synthesis or ribosome biogenesis. The protein is GTPase HflX of Spirochaeta thermophila (strain ATCC 49972 / DSM 6192 / RI 19.B1).